Consider the following 400-residue polypeptide: S-adenosylmethionine synthase (400 aa).

Residue 136–141 coordinates ATP; that stretch reads GTGSTD.

The protein belongs to the AdoMet synthase 2 family. Requires Mg(2+) as cofactor.

It catalyses the reaction L-methionine + ATP + H2O = S-adenosyl-L-methionine + phosphate + diphosphate. It participates in amino-acid biosynthesis; S-adenosyl-L-methionine biosynthesis; S-adenosyl-L-methionine from L-methionine: step 1/1. In terms of biological role, catalyzes the formation of S-adenosylmethionine from methionine and ATP. The sequence is that of S-adenosylmethionine synthase from Methanospirillum hungatei JF-1 (strain ATCC 27890 / DSM 864 / NBRC 100397 / JF-1).